The following is a 218-amino-acid chain: Mitochondrial fission factor (218 aa).

Residues 1-198 are Cytoplasmic-facing; that stretch reads MAEISRIQYE…ENKERAKREM (198 aa). A Phosphothreonine modification is found at threonine 89. Phosphoserine is present on residues serine 129, serine 131, serine 146, and serine 171. A coiled-coil region spans residues 167 to 198; it reads VDAASLRRQIIKLNRRLQLLEEENKERAKREM. Residues 199–216 form a helical; Anchor for type IV membrane protein membrane-spanning segment; the sequence is VMYSITVAFWLLNSWLWF. At 217-218 the chain is on the mitochondrial intermembrane side; that stretch reads RR.

The protein belongs to the Tango11 family. As to quaternary structure, homodimer. Interacts with DNM1L. Interacts with C11orf65/MFI; the interaction inhibits MFF interaction with DNM1L.

It is found in the mitochondrion outer membrane. Its subcellular location is the peroxisome. It localises to the cytoplasmic vesicle. The protein localises to the secretory vesicle. The protein resides in the synaptic vesicle. Plays a role in mitochondrial and peroxisomal fission. Promotes the recruitment and association of the fission mediator dynamin-related protein 1 (DNM1L) to the mitochondrial surface. May be involved in regulation of synaptic vesicle membrane dynamics by recruitment of DNM1L to clathrin-containing vesicles. The chain is Mitochondrial fission factor (MFF) from Pongo abelii (Sumatran orangutan).